A 52-amino-acid chain; its full sequence is uncharacterized protein (52 aa).

Residues 3-46 (KIQLESSNQSVLKLEERRLNLTAEIERIYGQMDLKRKELENANL) are a coiled coil.

This is an uncharacterized protein from Dictyostelium discoideum (Social amoeba).